Here is a 98-residue protein sequence, read N- to C-terminus: DNA-binding protein Fis (98 aa).

Positions 74–93 form a DNA-binding region, H-T-H motif; the sequence is QTRAAQMMGINRGTLRKKLK.

Belongs to the transcriptional regulatory Fis family. Homodimer.

Functionally, activates ribosomal RNA transcription. Plays a direct role in upstream activation of rRNA promoters. The protein is DNA-binding protein Fis of Sodalis glossinidius (strain morsitans).